We begin with the raw amino-acid sequence, 417 residues long: Tyrosine--tRNA ligase (417 aa).

Tyr-39 provides a ligand contact to L-tyrosine. Residues 44-53 (PTAPSLHAGG) carry the 'HIGH' region motif. Positions 176 and 180 each coordinate L-tyrosine. Positions 236–240 (KMGKS) match the 'KMSKS' region motif. Residue Lys-239 coordinates ATP. Residues 350-417 (IGVLALMVLA…KKRHVLIRPA (68 aa)) form the S4 RNA-binding domain.

The protein belongs to the class-I aminoacyl-tRNA synthetase family. TyrS type 1 subfamily. As to quaternary structure, homodimer.

The protein resides in the cytoplasm. The catalysed reaction is tRNA(Tyr) + L-tyrosine + ATP = L-tyrosyl-tRNA(Tyr) + AMP + diphosphate + H(+). Catalyzes the attachment of tyrosine to tRNA(Tyr) in a two-step reaction: tyrosine is first activated by ATP to form Tyr-AMP and then transferred to the acceptor end of tRNA(Tyr). This is Tyrosine--tRNA ligase from Brucella suis biovar 1 (strain 1330).